We begin with the raw amino-acid sequence, 465 residues long: 23S rRNA (uracil(1939)-C(5))-methyltransferase RlmD (465 aa).

Positions 1 to 22 (MSEAVPTSARKSRNAPVAPGPA) are disordered. The region spanning 16 to 80 (PVAPGPAPVL…PSYEQATVVD (65 aa)) is the TRAM domain. The [4Fe-4S] cluster site is built by Cys93, Cys99, Cys102, and Cys181. Positions 289, 318, 323, 339, 367, and 388 each coordinate S-adenosyl-L-methionine. Cys421 serves as the catalytic Nucleophile.

Belongs to the class I-like SAM-binding methyltransferase superfamily. RNA M5U methyltransferase family. RlmD subfamily.

The catalysed reaction is uridine(1939) in 23S rRNA + S-adenosyl-L-methionine = 5-methyluridine(1939) in 23S rRNA + S-adenosyl-L-homocysteine + H(+). In terms of biological role, catalyzes the formation of 5-methyl-uridine at position 1939 (m5U1939) in 23S rRNA. This Burkholderia lata (strain ATCC 17760 / DSM 23089 / LMG 22485 / NCIMB 9086 / R18194 / 383) protein is 23S rRNA (uracil(1939)-C(5))-methyltransferase RlmD.